The primary structure comprises 138 residues: CLAVATA3/ESR (CLE)-related protein 2 (138 aa).

The first 22 residues, 1-22, serve as a signal peptide directing secretion; the sequence is MPNIFKILLIVLLAVVSFRLSA. Residues 23–90 are required for secretion from the host cytoplasm to the host apoplasm; the sequence is STGDKKTAND…VPSHVTNRSM (68 aa). N-linked (GlcNAc...) asparagine glycosylation is found at N37, N87, and N123. Disordered stretches follow at residues 66–97 and 116–138; these read AIGR…PPPV and LAEK…PHHH. A CLE motif is present at residues 127-138; sequence RLSPSGPDPHHH.

The protein belongs to the CLV3/ESR signal peptide family. Highly expressed exclusively within the dorsal esophageal gland cell during syncytium formation in host plants (at protein level).

The protein localises to the secreted. It is found in the host cytoplasm. The protein resides in the host extracellular space. It localises to the extracellular space. Its subcellular location is the apoplast. In terms of biological role, mimics host plant CLE extracellular signal peptides that regulate cell fate. May play a role in the differentiation or division of feeding cells (syncytia) induced in plant roots during infection. This Heterodera glycines (Soybean cyst nematode worm) protein is CLAVATA3/ESR (CLE)-related protein 2 (CLE2).